A 491-amino-acid polypeptide reads, in one-letter code: Sucrose transport protein SUC7 (491 aa).

Positions 1–13 (MSDLQANKDETTV) are enriched in basic and acidic residues. The segment at 1-25 (MSDLQANKDETTVDRQSSSSVDLDG) is disordered. The Cytoplasmic segment spans residues 1-32 (MSDLQANKDETTVDRQSSSSVDLDGPSPLRKM). Ser-17 bears the Phosphoserine mark. The chain crosses the membrane as a helical span at residues 33-53 (ISVASIAAGIQFGWALQLSLL). Over 54-67 (TPYVQLLGVPHKWP) the chain is Extracellular. Residues 68–88 (SFIWLCGPVSGLLVQPSVGYF) form a helical membrane-spanning segment. The Cytoplasmic portion of the chain corresponds to 89-100 (SDRCTSRFGRRR). A helical transmembrane segment spans residues 101-121 (PFIATGALLVAVSVVLIGYAA). At 122–138 (DFGHSMGDKIDKPVKMR) the chain is on the extracellular side. A helical membrane pass occupies residues 139-159 (AVVIFALGFWILDVANNTLQG). Residues 160-180 (PCRAFLGDLAAGDAQKTRTAN) are Cytoplasmic-facing. A helical transmembrane segment spans residues 181–201 (AFFSFFMAVGNVLGYAAGSYT). Topologically, residues 202 to 223 (NLYKIFPFTMTKACDIYCANLK) are extracellular. A helical membrane pass occupies residues 224–244 (SCFFLSITLLLVVTIIALWYV). Residues 245 to 276 (EDKQWSPKADSDNEKTPFFGEIFGAFKVMKRP) lie on the Cytoplasmic side of the membrane. Residues 277-297 (MWMLLIVTALNWIAWFPFLLY) traverse the membrane as a helical segment. Over 298–323 (DTDWMGREVYGGDSKGDDKMKKLYNQ) the chain is Extracellular. A helical transmembrane segment spans residues 324 to 344 (GIHVGALGLMLNSIVLGVMSL). Residues 345–358 (GIEGISRKMGGAKR) are Cytoplasmic-facing. A helical membrane pass occupies residues 359–379 (LWGAVNIILAVCLAMTVLVTK). At 380–402 (KAEEHRRIAGPMALPTDGIRAGA) the chain is on the extracellular side. Residues 403 to 423 (LTLFALLGIPLAITFSIPFAL) traverse the membrane as a helical segment. The Cytoplasmic segment spans residues 424–443 (ASIISSSSGAGQRLSLGVLN). The chain crosses the membrane as a helical span at residues 444–464 (MAIVIPQMIVSFGVGPIDALF). Residues 465–468 (GDGN) are Extracellular-facing. The helical transmembrane segment at 469–489 (LPGFVVGAIAAAVSSIVAFTV) threads the bilayer. Residues 490-491 (LP) lie on the Cytoplasmic side of the membrane.

This sequence belongs to the glycoside-pentoside-hexuronide (GPH) cation symporter transporter (TC 2.A.2.4) family. In terms of tissue distribution, expressed in anthers.

The protein localises to the cell membrane. Its pathway is glycan biosynthesis; sucrose metabolism. In terms of biological role, may be responsible for the transport of glucosides into the cell, with the concomitant uptake of protons (symport system). Does not seem to transport sucrose. This Arabidopsis thaliana (Mouse-ear cress) protein is Sucrose transport protein SUC7.